Consider the following 178-residue polypeptide: Acireductone dioxygenase 1 (178 aa).

Positions 84, 86, 90, and 130 each coordinate Fe(2+). Ni(2+) is bound by residues His-84, His-86, Glu-90, and His-130.

The protein belongs to the acireductone dioxygenase (ARD) family. Fe(2+) serves as cofactor. The cofactor is Ni(2+).

It is found in the cytoplasm. It localises to the nucleus. The enzyme catalyses 1,2-dihydroxy-5-(methylsulfanyl)pent-1-en-3-one + O2 = 4-methylsulfanyl-2-oxobutanoate + formate + 2 H(+). It catalyses the reaction 1,2-dihydroxy-5-(methylsulfanyl)pent-1-en-3-one + O2 = 3-(methylsulfanyl)propanoate + CO + formate + 2 H(+). It participates in amino-acid biosynthesis; L-methionine biosynthesis via salvage pathway; L-methionine from S-methyl-5-thio-alpha-D-ribose 1-phosphate: step 5/6. In terms of biological role, catalyzes 2 different reactions between oxygen and the acireductone 1,2-dihydroxy-3-keto-5-methylthiopentene (DHK-MTPene) depending upon the metal bound in the active site. Fe-containing acireductone dioxygenase (Fe-ARD) produces formate and 2-keto-4-methylthiobutyrate (KMTB), the alpha-ketoacid precursor of methionine in the methionine recycle pathway. Ni-containing acireductone dioxygenase (Ni-ARD) produces methylthiopropionate, carbon monoxide and formate, and does not lie on the methionine recycle pathway. This is Acireductone dioxygenase 1 from Coprinopsis cinerea (strain Okayama-7 / 130 / ATCC MYA-4618 / FGSC 9003) (Inky cap fungus).